The chain runs to 365 residues: Peptide chain release factor 2 (365 aa).

Gln252 is modified (N5-methylglutamine).

Belongs to the prokaryotic/mitochondrial release factor family. Methylated by PrmC. Methylation increases the termination efficiency of RF2.

The protein localises to the cytoplasm. Peptide chain release factor 2 directs the termination of translation in response to the peptide chain termination codons UGA and UAA. The sequence is that of Peptide chain release factor 2 (prfB) from Salmonella typhimurium (strain LT2 / SGSC1412 / ATCC 700720).